Here is a 339-residue protein sequence, read N- to C-terminus: Phenylalanine--tRNA ligase alpha subunit (339 aa).

Glutamate 253 contributes to the Mg(2+) binding site.

This sequence belongs to the class-II aminoacyl-tRNA synthetase family. Phe-tRNA synthetase alpha subunit type 1 subfamily. As to quaternary structure, tetramer of two alpha and two beta subunits. Requires Mg(2+) as cofactor.

It localises to the cytoplasm. It catalyses the reaction tRNA(Phe) + L-phenylalanine + ATP = L-phenylalanyl-tRNA(Phe) + AMP + diphosphate + H(+). The polypeptide is Phenylalanine--tRNA ligase alpha subunit (Ruthia magnifica subsp. Calyptogena magnifica).